Consider the following 372-residue polypeptide: N-methyl-L-tryptophan oxidase (372 aa).

4-34 (DLIIIGSGSVGAAAGYYATRAGLNVLMTDAH) is an FAD binding site. An S-8alpha-FAD cysteine modification is found at Cys308.

It belongs to the MSOX/MTOX family. MTOX subfamily. In terms of assembly, monomer. It depends on FAD as a cofactor.

The catalysed reaction is N(alpha)-methyl-L-tryptophan + O2 + H2O = L-tryptophan + formaldehyde + H2O2. Its function is as follows. Catalyzes the oxidative demethylation of N-methyl-L-tryptophan. The sequence is that of N-methyl-L-tryptophan oxidase from Escherichia coli O127:H6 (strain E2348/69 / EPEC).